The following is a 472-amino-acid chain: UDP-N-acetylmuramate--L-alanine ligase (472 aa).

123-129 (GSHGKTT) is a binding site for ATP.

Belongs to the MurCDEF family.

Its subcellular location is the cytoplasm. The catalysed reaction is UDP-N-acetyl-alpha-D-muramate + L-alanine + ATP = UDP-N-acetyl-alpha-D-muramoyl-L-alanine + ADP + phosphate + H(+). It functions in the pathway cell wall biogenesis; peptidoglycan biosynthesis. Cell wall formation. This is UDP-N-acetylmuramate--L-alanine ligase from Solibacter usitatus (strain Ellin6076).